Here is a 334-residue protein sequence, read N- to C-terminus: Holliday junction branch migration complex subunit RuvB (334 aa).

Positions 4–184 are large ATPase domain (RuvB-L); the sequence is ADRLISAAVI…FGIVQRLEFY (181 aa). Residues I23, R24, G65, K68, T69, T70, 131 to 133, R174, Y184, and R221 contribute to the ATP site; that span reads EDY. Mg(2+) is bound at residue T69. Residues 185–255 are small ATPAse domain (RuvB-S); it reads PVADLEHIVS…VAMKALDMLN (71 aa). The head domain (RuvB-H) stretch occupies residues 258 to 334; the sequence is AEGFDFMDRK…YKHFGITREE (77 aa). Residues R294, R313, and R318 each coordinate DNA.

The protein belongs to the RuvB family. Homohexamer. Forms an RuvA(8)-RuvB(12)-Holliday junction (HJ) complex. HJ DNA is sandwiched between 2 RuvA tetramers; dsDNA enters through RuvA and exits via RuvB. An RuvB hexamer assembles on each DNA strand where it exits the tetramer. Each RuvB hexamer is contacted by two RuvA subunits (via domain III) on 2 adjacent RuvB subunits; this complex drives branch migration. In the full resolvosome a probable DNA-RuvA(4)-RuvB(12)-RuvC(2) complex forms which resolves the HJ.

It is found in the cytoplasm. It catalyses the reaction ATP + H2O = ADP + phosphate + H(+). The RuvA-RuvB-RuvC complex processes Holliday junction (HJ) DNA during genetic recombination and DNA repair, while the RuvA-RuvB complex plays an important role in the rescue of blocked DNA replication forks via replication fork reversal (RFR). RuvA specifically binds to HJ cruciform DNA, conferring on it an open structure. The RuvB hexamer acts as an ATP-dependent pump, pulling dsDNA into and through the RuvAB complex. RuvB forms 2 homohexamers on either side of HJ DNA bound by 1 or 2 RuvA tetramers; 4 subunits per hexamer contact DNA at a time. Coordinated motions by a converter formed by DNA-disengaged RuvB subunits stimulates ATP hydrolysis and nucleotide exchange. Immobilization of the converter enables RuvB to convert the ATP-contained energy into a lever motion, pulling 2 nucleotides of DNA out of the RuvA tetramer per ATP hydrolyzed, thus driving DNA branch migration. The RuvB motors rotate together with the DNA substrate, which together with the progressing nucleotide cycle form the mechanistic basis for DNA recombination by continuous HJ branch migration. Branch migration allows RuvC to scan DNA until it finds its consensus sequence, where it cleaves and resolves cruciform DNA. The sequence is that of Holliday junction branch migration complex subunit RuvB from Yersinia pestis bv. Antiqua (strain Angola).